We begin with the raw amino-acid sequence, 390 residues long: Elongation factor Ts, mitochondrial (390 aa).

It belongs to the EF-Ts family.

Its subcellular location is the mitochondrion. In terms of biological role, associates with the EF-Tu.GDP complex and induces the exchange of GDP to GTP. It remains bound to the aminoacyl-tRNA.EF-Tu.GTP complex up to the GTP hydrolysis stage on the ribosome. This is Elongation factor Ts, mitochondrial from Plasmodium falciparum (isolate 3D7).